A 522-amino-acid polypeptide reads, in one-letter code: Nitrogen fixation protein VnfA (522 aa).

The a domain stretch occupies residues 22–183 (LLYEMSQIAT…AQAVELYLVE (162 aa)). The GAF domain maps to 35-177 (DLSSIISILL…ILATTTAQAV (143 aa)). The region spanning 210–439 (IIGNSKPMLE…LENVIERAML (230 aa)) is the Sigma-54 factor interaction domain. Residues 238–245 (GESGVGKE) and 301–310 (AAGGTIFLDE) contribute to the ATP site. The H-T-H motif DNA-binding region spans 493 to 512 (MTEAATHLGLTARVLGLRMG).

Its function is as follows. Required for the expression of the V-dependent nitrogen fixation system in Azotobacter vinelandii. It is required for the regulation of nitrogenase 2 transcription. Interacts with sigma-54. The protein is Nitrogen fixation protein VnfA (vnfA) of Azotobacter vinelandii.